The chain runs to 529 residues: CRISPR-associated endodeoxyribonuclease Cas12f1 (529 aa).

Residues 1–95 (MAKNTITKTL…RGQFPDAVFW (95 aa)) form a zinc finger domain (ZF) region. 4 residues coordinate Zn(2+): C50, H53, C69, and C72. The tract at residues 96 to 192 (QEISEIFRQL…PTTKSDNFPI (97 aa)) is recognition domain (REC). The tract at residues 193-312 (PLVKQKGGQY…MLNLSIDVPK (120 aa)) is wedge domain (WED). The interval 313–321 (IDKGVDPSI) is linker. The ruvC-I stretch occupies residues 322 to 473 (IGGIDVGVKS…RKVAPNNTSK (152 aa)). Catalysis depends on residues D326 and E422. Residues 474 to 508 (TCSKCGHLNNYFNFEYRKKNKFPHFKCEKCNFKEN) are target nucleic acid-binding (TNB). Residues C475 and C478 each contribute to the Zn(2+) site. The active site involves R490. Positions 500 and 503 each coordinate Zn(2+). Positions 509-529 (ADYNAALNISNPKLKSTKEEP) are ruvC-II. The active site involves D510.

Belongs to the CRISPR-associated endonuclease Cas12f family. In terms of assembly, an asymmetric homodimer. Guide RNA is probably required for dimerization. The cofactor is Mg(2+). Requires Zn(2+) as cofactor.

Target ssDNA cleavage is inhibited by EDTA. Activity is maximal with 5-50 mM NaCl, is less efficient at higher NaCl concentrations. CRISPR (clustered regularly interspaced short palindromic repeat), is an adaptive immune system that provides protection against mobile genetic elements (viruses, transposable elements and conjugative plasmids). CRISPR clusters contain sequences complementary to antecedent mobile elements and target invading nucleic acids. CRISPR clusters are transcribed and processed into CRISPR RNA (crRNA), which requires a trans-encoded small RNA (tracrRNA), but not this protein (in vitro). Upon expression in E.coli of this protein, a mini CRISPR array and the probable tracrRNA, the protein associates with both RNAs. The mini system is not active in E.coli against phiX174 phage, nor is it active in protection against transformation by foreign plasmids. In vitro the purified protein-tracrRNA-crRNA complex cleaves ssDNA complementary to the crRNA; target cleavage requires both tracrRNA and crRNA, but not a protospacer adjacent motif (PAM). The tracrRNA-crRNA can be replaced by a single guide RNA (sgRNA). 2-nucleotide mismatches in the middle of the crRNA:DNA heteroduplex decrease cleavage. Cleavage occurs just downstream of the heteroduplex. Activation of this protein results in non-specific ssDNA degradation in vitro. In vitro and in E.coli (coexpressed with sgRNA) has dsDNA endonuclease activity, recognizing the 5' PAM sequence TTTR; both sgRNA and a PAM are required for activity. Cleaves the target strand 24 and the nontarget strand 22 bases upstream of the PAM (respectively), resulting in 5' overhangs. The 2 monomers interact differently with the sgRNA and target DNA. Mutagenesis of a dimeric construct shows that one of the RuvC monomers probably cleaves both DNA strands. The chain is CRISPR-associated endodeoxyribonuclease Cas12f1 from Uncultured archaeon.